A 61-amino-acid polypeptide reads, in one-letter code: Probable tautomerase stu1128 (61 aa).

The Proton acceptor; via imino nitrogen role is filled by Pro2.

This sequence belongs to the 4-oxalocrotonate tautomerase family.

This is Probable tautomerase stu1128 from Streptococcus thermophilus (strain ATCC BAA-250 / LMG 18311).